The following is a 747-amino-acid chain: Sushi domain-containing protein 1 (747 aa).

An N-terminal signal peptide occupies residues 1-29 (MGRGPWDAGPSRRLLPLLLLLGLARGAAG). The Extracellular portion of the chain corresponds to 30–721 (APGPDGLDVC…WAQVKDSSLM (692 aa)). The region spanning 35–72 (GLDVCATCHEHATCQQREGKKICICNYGFVGNGRTQCV) is the EGF-like 1 domain. 5 disulfide bridges follow: cysteine 39–cysteine 48, cysteine 42–cysteine 57, cysteine 59–cysteine 71, cysteine 77–cysteine 91, and cysteine 85–cysteine 100. Residues 73–112 (DKNECQFGATLVCGNHTSCHNTPGGFYCICLEGYRATNNN) form the EGF-like 2; calcium-binding domain. Residues asparagine 87 and asparagine 112 are each glycosylated (N-linked (GlcNAc...) asparagine). One can recognise an EGF-like 3; calcium-binding domain in the interval 125-162 (DIDECEVSGLCRHGGRCVNTHGSFECYCMDGYLPRNGP). 6 disulfide bridges follow: cysteine 129/cysteine 141, cysteine 135/cysteine 150, cysteine 179/cysteine 221, cysteine 206/cysteine 234, cysteine 239/cysteine 281, and cysteine 266/cysteine 294. 2 consecutive Sushi domains span residues 177–236 (IDCG…HCQE) and 237–296 (INCG…TCTE). Asparagine 193 is a glycosylation site (N-linked (GlcNAc...) asparagine). Asparagine 253 is a glycosylation site (N-linked (GlcNAc...) asparagine). Asparagine 348, asparagine 367, and asparagine 563 each carry an N-linked (GlcNAc...) asparagine glycan. A helical transmembrane segment spans residues 722-742 (LLQMAGVGLGSLAVVIILTFL). The Cytoplasmic portion of the chain corresponds to 743-747 (SFSAV).

It is found in the membrane. The polypeptide is Sushi domain-containing protein 1 (SUSD1) (Homo sapiens (Human)).